A 418-amino-acid polypeptide reads, in one-letter code: MSSVPIDSVQAAQQVVSTKIKDKSWIMPTDPAEFLQQIAYQSQLLACLHWLGEFQILACVPLSGSVPIKDVADLAGVPVSQLAHVIRFMATAGFMKEPRRGEVAHTPQSAAFVTDPSFLDAGIFLAQVSARSARKMAQNSAISTLMGGDGANNGSDFDNGELLKSTSESPRVQREVTAYLHYVVNEVSDTANLLAQLDWRKLGSSSVVEIRADRIYPASLVLTELHSTPRFTVQTFQEDSVEQGTAVTTTATTSSSFISKSSEEPSPKRIKPGITYQKRSLGSPQVVTDATMYVMRLERPHSTSVQRSILDEGQIVSELRAHLGVLKHNSNATLILIGPLLPEAGAIDAKAEMVVRFRDLSLNQLTSEREMEVGELVDIIGDVQDESGCLVVVNKLYSRTSSTVALEVRYELYNYRKG.

Positions 244-272 are disordered; the sequence is GTAVTTTATTSSSFISKSSEEPSPKRIKP. The segment covering 245–260 has biased composition (low complexity); sequence TAVTTTATTSSSFISK.

Its subcellular location is the nucleus. Functionally, transcription factor that, with ptaR2 and ptaR3, coregulates the expression of the gene cluster that mediates the biosynthesis of pestheic acid, a diphenyl ether which is a biosynthetic precursor of the unique chloropupukeananes. In Pestalotiopsis fici (strain W106-1 / CGMCC3.15140), this protein is Pestheic acid cluster transcriptional regulator 1.